The primary structure comprises 130 residues: Large ribosomal subunit protein bL17 (130 aa).

It belongs to the bacterial ribosomal protein bL17 family. In terms of assembly, part of the 50S ribosomal subunit. Contacts protein L32.

The chain is Large ribosomal subunit protein bL17 from Buchnera aphidicola subsp. Acyrthosiphon pisum (strain 5A).